Reading from the N-terminus, the 382-residue chain is Succinyl-diaminopimelate desuccinylase (382 aa).

His73 provides a ligand contact to Zn(2+). Residue Asp75 is part of the active site. Asp106 contacts Zn(2+). The Proton acceptor role is filled by Glu140. Zn(2+)-binding residues include Glu141, Glu169, and His355.

The protein belongs to the peptidase M20A family. DapE subfamily. Homodimer. Zn(2+) serves as cofactor. The cofactor is Co(2+).

It carries out the reaction N-succinyl-(2S,6S)-2,6-diaminopimelate + H2O = (2S,6S)-2,6-diaminopimelate + succinate. It functions in the pathway amino-acid biosynthesis; L-lysine biosynthesis via DAP pathway; LL-2,6-diaminopimelate from (S)-tetrahydrodipicolinate (succinylase route): step 3/3. Its function is as follows. Catalyzes the hydrolysis of N-succinyl-L,L-diaminopimelic acid (SDAP), forming succinate and LL-2,6-diaminopimelate (DAP), an intermediate involved in the bacterial biosynthesis of lysine and meso-diaminopimelic acid, an essential component of bacterial cell walls. The protein is Succinyl-diaminopimelate desuccinylase of Leptothrix cholodnii (strain ATCC 51168 / LMG 8142 / SP-6) (Leptothrix discophora (strain SP-6)).